The sequence spans 156 residues: Small ribosomal subunit protein uS7 (156 aa).

This sequence belongs to the universal ribosomal protein uS7 family. As to quaternary structure, part of the 30S ribosomal subunit. Contacts proteins S9 and S11.

One of the primary rRNA binding proteins, it binds directly to 16S rRNA where it nucleates assembly of the head domain of the 30S subunit. Is located at the subunit interface close to the decoding center, probably blocks exit of the E-site tRNA. The chain is Small ribosomal subunit protein uS7 from Paraburkholderia phymatum (strain DSM 17167 / CIP 108236 / LMG 21445 / STM815) (Burkholderia phymatum).